Here is a 358-residue protein sequence, read N- to C-terminus: S-adenosylmethionine decarboxylase proenzyme (358 aa).

Catalysis depends on residues Glu11 and Glu14. The active-site Schiff-base intermediate with substrate; via pyruvic acid is the Ser71. A Pyruvic acid (Ser); by autocatalysis modification is found at Ser71. Cys85 functions as the Proton donor; for catalytic activity in the catalytic mechanism. Active-site proton acceptor; for processing activity residues include Ser234 and His247.

Belongs to the eukaryotic AdoMetDC family. Requires pyruvate as cofactor. In terms of processing, is synthesized initially as an inactive proenzyme. Formation of the active enzyme involves a self-maturation process in which the active site pyruvoyl group is generated from an internal serine residue via an autocatalytic post-translational modification. Two non-identical subunits are generated from the proenzyme in this reaction, and the pyruvate is formed at the N-terminus of the alpha chain, which is derived from the carboxyl end of the proenzyme. The post-translation cleavage follows an unusual pathway, termed non-hydrolytic serinolysis, in which the side chain hydroxyl group of the serine supplies its oxygen atom to form the C-terminus of the beta chain, while the remainder of the serine residue undergoes an oxidative deamination to produce ammonia and the pyruvoyl group blocking the N-terminus of the alpha chain.

It catalyses the reaction S-adenosyl-L-methionine + H(+) = S-adenosyl 3-(methylsulfanyl)propylamine + CO2. It participates in amine and polyamine biosynthesis; S-adenosylmethioninamine biosynthesis; S-adenosylmethioninamine from S-adenosyl-L-methionine: step 1/1. This chain is S-adenosylmethionine decarboxylase proenzyme (SAMDC), found in Solanum chilense (Tomato).